The sequence spans 150 residues: Male-specific protein scotti (150 aa).

Positions 60–84 are disordered; the sequence is PPMAVFPARGGPNGGPPRLRKKRSF. Asparagine 131 carries an N-linked (GlcNAc...) asparagine glycan.

It belongs to the male-specific scotti family.

Its function is as follows. Post-meiotically transcribed gene that has a role in late spermiogenesis; required for actin cone progression during spermatid individualization. The chain is Male-specific protein scotti from Drosophila yakuba (Fruit fly).